Reading from the N-terminus, the 231-residue chain is MNDQKIIVALDYDNQADALAFVDRIDPASCRLKVGKEMFTLFGPEFVRELHKRGFSVFLDLKFHDIPNTCSKAVRAAAEMGVWMVNVHASGGERMMTASREILEPYGKDRPLLIGVTVLTSMEQSDLAGIGLDLEPQQQVMRLASLTKNSGLDGVVCSAQEASLLKGALGQEFKLVTPGIRPVGADVGDQKRIMTPSKAIESGSDYLVIGRPITQAIDPAAVLAEINGTLA.

Substrate contacts are provided by residues Asp11, Lys33, 60–69 (DLKFHDIPNT), Thr120, Arg181, Gln190, Gly210, and Arg211. The Proton donor role is filled by Lys62.

The protein belongs to the OMP decarboxylase family. Type 1 subfamily. In terms of assembly, homodimer.

It carries out the reaction orotidine 5'-phosphate + H(+) = UMP + CO2. The protein operates within pyrimidine metabolism; UMP biosynthesis via de novo pathway; UMP from orotate: step 2/2. Its function is as follows. Catalyzes the decarboxylation of orotidine 5'-monophosphate (OMP) to uridine 5'-monophosphate (UMP). In Vibrio atlanticus (strain LGP32) (Vibrio splendidus (strain Mel32)), this protein is Orotidine 5'-phosphate decarboxylase.